Reading from the N-terminus, the 220-residue chain is Adenylate kinase (220 aa).

Residue 10-15 (GAGKGT) participates in ATP binding. The tract at residues 30–59 (STGDMLRAAVKAGTPLGVEAKTYMDEGKLV) is NMP. AMP contacts are provided by residues Thr31, Arg36, 57-59 (KLV), 85-88 (GFPR), and Gln92. The segment at 122–159 (GRRTHPASGRTYHVKFNPPKVEGKDDVTGEPLVQRDDD) is LID. ATP contacts are provided by residues Arg123 and 132 to 133 (TY). Positions 156 and 167 each coordinate AMP. Gly206 lines the ATP pocket.

It belongs to the adenylate kinase family. As to quaternary structure, monomer.

The protein resides in the cytoplasm. The catalysed reaction is AMP + ATP = 2 ADP. The protein operates within purine metabolism; AMP biosynthesis via salvage pathway; AMP from ADP: step 1/1. In terms of biological role, catalyzes the reversible transfer of the terminal phosphate group between ATP and AMP. Plays an important role in cellular energy homeostasis and in adenine nucleotide metabolism. The sequence is that of Adenylate kinase from Burkholderia mallei (strain NCTC 10247).